A 347-amino-acid chain; its full sequence is Ribosomal RNA small subunit methyltransferase C (347 aa).

This sequence belongs to the methyltransferase superfamily. RsmC family. In terms of assembly, monomer.

It localises to the cytoplasm. It catalyses the reaction guanosine(1207) in 16S rRNA + S-adenosyl-L-methionine = N(2)-methylguanosine(1207) in 16S rRNA + S-adenosyl-L-homocysteine + H(+). In terms of biological role, specifically methylates the guanine in position 1207 of 16S rRNA in the 30S particle. The chain is Ribosomal RNA small subunit methyltransferase C from Shewanella baltica (strain OS155 / ATCC BAA-1091).